The following is a 105-amino-acid chain: UPF0145 protein VP1283 (105 aa).

Belongs to the UPF0145 family.

The protein is UPF0145 protein VP1283 of Vibrio parahaemolyticus serotype O3:K6 (strain RIMD 2210633).